The sequence spans 302 residues: HTH-type transcriptional regulator ArgP (302 aa).

The HTH lysR-type domain maps to 4–60; it reads PDYRTLQALDAVIRERGFERAAQKLCITQSAVSQRIKQLENLFGQPLLVRTVPPRPT. A DNA-binding region (H-T-H motif) is located at residues 21-40; the sequence is FERAAQKLCITQSAVSQRIK.

The protein belongs to the LysR transcriptional regulatory family. As to quaternary structure, homodimer.

Its function is as follows. Controls the transcription of genes involved in arginine and lysine metabolism. The polypeptide is HTH-type transcriptional regulator ArgP (Yersinia pseudotuberculosis serotype O:1b (strain IP 31758)).